The sequence spans 437 residues: CCA-adding enzyme (437 aa).

Residues serine 50 and lysine 53 each contribute to the ATP site. Residues serine 50 and lysine 53 each coordinate CTP. 3 residues coordinate Mg(2+): aspartate 61, aspartate 63, and aspartate 112. 3 residues coordinate ATP: histidine 135, lysine 155, and tyrosine 164. 3 residues coordinate CTP: histidine 135, lysine 155, and tyrosine 164.

The protein belongs to the tRNA nucleotidyltransferase/poly(A) polymerase family. Archaeal CCA-adding enzyme subfamily. As to quaternary structure, homodimer. It depends on Mg(2+) as a cofactor.

It carries out the reaction a tRNA precursor + 2 CTP + ATP = a tRNA with a 3' CCA end + 3 diphosphate. It catalyses the reaction a tRNA with a 3' CCA end + 2 CTP + ATP = a tRNA with a 3' CCACCA end + 3 diphosphate. In terms of biological role, catalyzes the addition and repair of the essential 3'-terminal CCA sequence in tRNAs without using a nucleic acid template. Adds these three nucleotides in the order of C, C, and A to the tRNA nucleotide-73, using CTP and ATP as substrates and producing inorganic pyrophosphate. tRNA 3'-terminal CCA addition is required both for tRNA processing and repair. Also involved in tRNA surveillance by mediating tandem CCA addition to generate a CCACCA at the 3' terminus of unstable tRNAs. While stable tRNAs receive only 3'-terminal CCA, unstable tRNAs are marked with CCACCA and rapidly degraded. This chain is CCA-adding enzyme, found in Thermoplasma volcanium (strain ATCC 51530 / DSM 4299 / JCM 9571 / NBRC 15438 / GSS1).